The primary structure comprises 40 residues: MMSEPGRIPLWLVALVAGTGVLVVVGLFFYGSYVGVGSSL.

Residues 8 to 28 (IPLWLVALVAGTGVLVVVGLF) traverse the membrane as a helical segment.

This sequence belongs to the PsbJ family. As to quaternary structure, PSII is composed of 1 copy each of membrane proteins PsbA, PsbB, PsbC, PsbD, PsbE, PsbF, PsbH, PsbI, PsbJ, PsbK, PsbL, PsbM, PsbT, PsbX, PsbY, PsbZ, Psb30/Ycf12, peripheral proteins PsbO, CyanoQ (PsbQ), PsbU, PsbV and a large number of cofactors. It forms dimeric complexes.

It localises to the cellular thylakoid membrane. Functionally, one of the components of the core complex of photosystem II (PSII). PSII is a light-driven water:plastoquinone oxidoreductase that uses light energy to abstract electrons from H(2)O, generating O(2) and a proton gradient subsequently used for ATP formation. It consists of a core antenna complex that captures photons, and an electron transfer chain that converts photonic excitation into a charge separation. This is Photosystem II reaction center protein J from Trichodesmium erythraeum (strain IMS101).